Reading from the N-terminus, the 335-residue chain is Epidermal differentiation-specific protein (335 aa).

4 Beta/gamma crystallin 'Greek key' domains span residues 2–42 (NTIT…KIVG), 43–81 (QPWILHQDINYSGQCLPLEEGEYSGISMNDGASSLRLIT), 87–126 (PQITVYEHVNGGGKALVLTEETNLAFGNMHDNISSHRVQR), and 127–169 (GAWA…YPLR).

This sequence belongs to the beta/gamma-crystallin family. Epidermis specific.

In Cynops pyrrhogaster (Japanese fire-bellied newt), this protein is Epidermal differentiation-specific protein.